The primary structure comprises 164 residues: Oocyte-expressed protein homolog (164 aa).

Residues 44–105 form the KH; atypical domain; the sequence is PLVLYMEAWV…SAQTRMKNIL (62 aa).

Belongs to the KHDC1 family. In terms of assembly, component of the subcortical maternal complex (SCMC), at least composed of NLRP5, KHDC3, OOEP, and TLE6. Within the complex, interacts with NLRP5, KHDC3 and TLE6. The SCMC may facilitate translocation of its components between the nuclear and cytoplasmic compartments. As part of the SCMC interacts with the SCMC-associated protein NLRP4F. Forms a scaffold complex with KHDC3/FILIA, and interacts with BLM and TRIM25 at DNA replication forks. In terms of tissue distribution, expressed in ovaries, where it is restricted to growing oocytes, with greatest levels in fully grown oocytes.

It is found in the cytoplasm. The protein localises to the nucleus. Its function is as follows. Component of the subcortical maternal complex (SCMC), a multiprotein complex that plays a key role in early embryonic development. The SCMC complex is a structural constituent of cytoplasmic lattices, which consist in fibrous structures found in the cytoplasm of oocytes and preimplantation embryos. They are required to store maternal proteins critical for embryonic development, such as proteins that control epigenetic reprogramming of the preimplantation embryo, and prevent their degradation or activation. As part of the OOEP-KHDC3 scaffold, recruits BLM and TRIM25 to DNA replication forks, thereby promoting the ubiquitination of BLM by TRIM25, enhancing BLM retainment at replication forks and therefore promoting stalled replication fork restart. Positively regulates the homologous recombination-mediated DNA double-strand break (DSB) repair pathway by regulating ATM activation and RAD51 recruitment to DSBs in oocytes. Thereby contributes to oocyte survival and the resumption and completion of meiosis. This is Oocyte-expressed protein homolog from Mus musculus (Mouse).